The primary structure comprises 362 residues: S-adenosylmethionine decarboxylase proenzyme (362 aa).

Active-site residues include E11 and E14. Residue S71 is the Schiff-base intermediate with substrate; via pyruvic acid of the active site. The residue at position 71 (S71) is a Pyruvic acid (Ser); by autocatalysis. Residue C85 is the Proton donor; for catalytic activity of the active site. Residues S234 and H247 each act as proton acceptor; for processing activity in the active site.

It belongs to the eukaryotic AdoMetDC family. It depends on pyruvate as a cofactor. Is synthesized initially as an inactive proenzyme. Formation of the active enzyme involves a self-maturation process in which the active site pyruvoyl group is generated from an internal serine residue via an autocatalytic post-translational modification. Two non-identical subunits are generated from the proenzyme in this reaction, and the pyruvate is formed at the N-terminus of the alpha chain, which is derived from the carboxyl end of the proenzyme. The post-translation cleavage follows an unusual pathway, termed non-hydrolytic serinolysis, in which the side chain hydroxyl group of the serine supplies its oxygen atom to form the C-terminus of the beta chain, while the remainder of the serine residue undergoes an oxidative deamination to produce ammonia and the pyruvoyl group blocking the N-terminus of the alpha chain.

The enzyme catalyses S-adenosyl-L-methionine + H(+) = S-adenosyl 3-(methylsulfanyl)propylamine + CO2. It functions in the pathway amine and polyamine biosynthesis; S-adenosylmethioninamine biosynthesis; S-adenosylmethioninamine from S-adenosyl-L-methionine: step 1/1. The polypeptide is S-adenosylmethionine decarboxylase proenzyme (SAMDC) (Ipomoea nil (Japanese morning glory)).